Consider the following 494-residue polypeptide: Glutamate decarboxylase 5 (494 aa).

K276 bears the N6-(pyridoxal phosphate)lysine mark.

This sequence belongs to the group II decarboxylase family. As to quaternary structure, homohexamer. Interacts with calmodulin. Requires pyridoxal 5'-phosphate as cofactor. In terms of tissue distribution, expressed in flowers.

The catalysed reaction is L-glutamate + H(+) = 4-aminobutanoate + CO2. In terms of biological role, catalyzes the production of GABA. The calmodulin-binding is calcium-dependent and it is proposed that this may, directly or indirectly, form a calcium regulated control of GABA biosynthesis. This chain is Glutamate decarboxylase 5 (GAD5), found in Arabidopsis thaliana (Mouse-ear cress).